We begin with the raw amino-acid sequence, 226 residues long: Endonuclease NucS (226 aa).

It belongs to the NucS endonuclease family.

It is found in the cytoplasm. In terms of biological role, cleaves both 3' and 5' ssDNA extremities of branched DNA structures. The protein is Endonuclease NucS of Mycobacterium tuberculosis (strain CDC 1551 / Oshkosh).